The following is a 546-amino-acid chain: Hydroxylamine reductase (546 aa).

Positions 3, 6, 18, and 25 each coordinate [4Fe-4S] cluster. Positions 245, 269, 313, 401, 429, 454, 488, and 490 each coordinate hybrid [4Fe-2O-2S] cluster. Residue C401 is modified to Cysteine persulfide.

It belongs to the HCP family. Requires [4Fe-4S] cluster as cofactor. Hybrid [4Fe-2O-2S] cluster serves as cofactor.

Its subcellular location is the cytoplasm. The catalysed reaction is A + NH4(+) + H2O = hydroxylamine + AH2 + H(+). With respect to regulation, inhibited by cyanide and by sulfide and iron reagents such as dithioerythritol, 2,2'-dipyridyl and o-phenanthroline. Functionally, could be involved in assimilation and/or detoxification of hydroxylamine, which is a toxic compound that may be formed during nitrate/nitrite assimilation. Catalyzes the reduction of hydroxylamine to form NH(3) and H(2)O. It has a low reductase activity with FAD, FMN, benzyl viologen and bromphenol blue as electrons donors, but it is not able to use NAD or NADP. This is Hydroxylamine reductase from Rhodobacter capsulatus (Rhodopseudomonas capsulata).